An 818-amino-acid polypeptide reads, in one-letter code: Dipeptidyl aminopeptidase B (818 aa).

Over 1–29 the chain is Cytoplasmic; that stretch reads MEGGEEEVERIPDELFDTKKKHLLDKLIR. The chain crosses the membrane as a helical; Signal-anchor for type II membrane protein span at residues 30-45; sequence VGIILVLLIWGTVLLL. Over 46 to 818 the chain is Lumenal; the sequence is KSIPHHSNTP…KRAFDGQFVK (773 aa). Asparagine 63, asparagine 79, asparagine 110, asparagine 139, asparagine 372, asparagine 392, and asparagine 421 each carry an N-linked (GlcNAc...) asparagine glycan. The active-site Charge relay system is the serine 679. N-linked (GlcNAc...) asparagine glycosylation occurs at asparagine 738. Active-site charge relay system residues include aspartate 756 and histidine 789.

It belongs to the peptidase S9B family.

The protein localises to the vacuole membrane. In Saccharomyces cerevisiae (strain ATCC 204508 / S288c) (Baker's yeast), this protein is Dipeptidyl aminopeptidase B (DAP2).